Here is a 220-residue protein sequence, read N- to C-terminus: Cell surface glycolipoprotein MPB83 (220 aa).

Residues 1-24 (MINVQAKPAAAASLAAIAIAFLAG) form the signal peptide. Residue Cys25 is the site of N-palmitoyl cysteine attachment. The S-diacylglycerol cysteine moiety is linked to residue Cys25. O-linked (Man...) threonine glycosylation is found at Thr48 and Thr49. The 133-residue stretch at 83–215 (QDPVATAASN…ATVYMIDTVL (133 aa)) folds into the FAS1 domain.

In terms of assembly, interacts with host (human) TLR2. Post-translationally, O-glycosylated. Contains 0-3 mannose residues attached to residues 48-49 in various configurations; the dominant glycoform is Thr-48(Man)/Thr-49(Man2) with an unusual Man(1-&gt;3)Man linkage, but Thr48(Man3)/Thr49(Man0) through to Thr48(Man0/)Thr49(Man3) are also seen. In terms of processing, when isolated from culture filtrate runs as 25 and 23 kDa proteins; the larger protein is much less abundant, mostly associated with the cell and starts at residue 28, the shorter is more abundant and starts at residue 48.

The protein resides in the cell membrane. It localises to the secreted. Its subcellular location is the cell wall. In terms of biological role, induces expression of human (host) matrix metalloproteinase-9 (MMP9) in a TLR1/TLR2-dependent fashion; the acylated 20 first mature residues (residues 25-40) induce the most expression, but whole recombinant protein (non-acylated and non-glycosylated), and mannosylated but not acylated protein (residues 26-220) also induce expression. The sequence is that of Cell surface glycolipoprotein MPB83 (mpb83) from Mycobacterium bovis (strain ATCC BAA-935 / AF2122/97).